The sequence spans 238 residues: Uroporphyrinogen-III C-methyltransferase (238 aa).

S-adenosyl-L-homocysteine is bound by residues Pro-11, 87–89, 117–118, and Met-170; these read GGD and TS.

This sequence belongs to the precorrin methyltransferase family. Monomer.

It carries out the reaction uroporphyrinogen III + 2 S-adenosyl-L-methionine = precorrin-2 + 2 S-adenosyl-L-homocysteine + H(+). It functions in the pathway cofactor biosynthesis; adenosylcobalamin biosynthesis; precorrin-2 from uroporphyrinogen III: step 1/1. It participates in porphyrin-containing compound metabolism; siroheme biosynthesis; precorrin-2 from uroporphyrinogen III: step 1/1. SUMT exhibits a substrate inhibition phenomenon at uroporphyrinogen III concentrations above 0.5 uM; this property might play a regulatory role in cobalamin biosynthesis. In terms of biological role, catalyzes the two successive C-2 and C-7 methylation reactions involved in the conversion of uroporphyrinogen III to precorrin-2 via the intermediate formation of precorrin-1. It is a step in the biosynthesis of both cobalamin (vitamin B12) and siroheme. This chain is Uroporphyrinogen-III C-methyltransferase, found in Priestia megaterium (Bacillus megaterium).